Reading from the N-terminus, the 429-residue chain is Glutamate-1-semialdehyde 2,1-aminomutase 2 (429 aa).

N6-(pyridoxal phosphate)lysine is present on K268.

It belongs to the class-III pyridoxal-phosphate-dependent aminotransferase family. HemL subfamily. In terms of assembly, homodimer. The cofactor is pyridoxal 5'-phosphate.

Its subcellular location is the cytoplasm. It catalyses the reaction (S)-4-amino-5-oxopentanoate = 5-aminolevulinate. It functions in the pathway porphyrin-containing compound metabolism; protoporphyrin-IX biosynthesis; 5-aminolevulinate from L-glutamyl-tRNA(Glu): step 2/2. This chain is Glutamate-1-semialdehyde 2,1-aminomutase 2, found in Bacillus cereus (strain AH187).